Consider the following 511-residue polypeptide: ATP synthase subunit alpha (511 aa).

Residue 170–177 coordinates ATP; sequence GDRQTGKT.

This sequence belongs to the ATPase alpha/beta chains family. In terms of assembly, F-type ATPases have 2 components, CF(1) - the catalytic core - and CF(0) - the membrane proton channel. CF(1) has five subunits: alpha(3), beta(3), gamma(1), delta(1), epsilon(1). CF(0) has three main subunits: a(1), b(2) and c(9-12). The alpha and beta chains form an alternating ring which encloses part of the gamma chain. CF(1) is attached to CF(0) by a central stalk formed by the gamma and epsilon chains, while a peripheral stalk is formed by the delta and b chains.

The protein localises to the cell inner membrane. The catalysed reaction is ATP + H2O + 4 H(+)(in) = ADP + phosphate + 5 H(+)(out). In terms of biological role, produces ATP from ADP in the presence of a proton gradient across the membrane. The alpha chain is a regulatory subunit. The protein is ATP synthase subunit alpha of Pelagibacter ubique (strain HTCC1062).